Here is a 219-residue protein sequence, read N- to C-terminus: Nodulation protein NolA (219 aa).

Residues 10 to 79 form the HTH merR-type domain; sequence RWRIGELAEA…LHEIRKAMEG (70 aa). A DNA-binding region (H-T-H motif) is located at residues 13 to 32; it reads IGELAEATGVTVRTLHHYEH.

Functionally, involved in genotype-specific nodulation of soybeans. The chain is Nodulation protein NolA (nolA) from Bradyrhizobium elkanii.